A 233-amino-acid chain; its full sequence is Aspartate/glutamate leucyltransferase (233 aa).

Belongs to the R-transferase family. Bpt subfamily.

The protein localises to the cytoplasm. It carries out the reaction N-terminal L-glutamyl-[protein] + L-leucyl-tRNA(Leu) = N-terminal L-leucyl-L-glutamyl-[protein] + tRNA(Leu) + H(+). It catalyses the reaction N-terminal L-aspartyl-[protein] + L-leucyl-tRNA(Leu) = N-terminal L-leucyl-L-aspartyl-[protein] + tRNA(Leu) + H(+). In terms of biological role, functions in the N-end rule pathway of protein degradation where it conjugates Leu from its aminoacyl-tRNA to the N-termini of proteins containing an N-terminal aspartate or glutamate. In Vibrio cholerae serotype O1 (strain ATCC 39541 / Classical Ogawa 395 / O395), this protein is Aspartate/glutamate leucyltransferase.